The following is a 332-amino-acid chain: 4-hydroxythreonine-4-phosphate dehydrogenase (332 aa).

2 residues coordinate substrate: His-138 and Thr-139. His-168, His-213, and His-269 together coordinate a divalent metal cation. Positions 277, 286, and 295 each coordinate substrate.

It belongs to the PdxA family. In terms of assembly, homodimer. Requires Zn(2+) as cofactor. It depends on Mg(2+) as a cofactor. The cofactor is Co(2+).

The protein localises to the cytoplasm. It catalyses the reaction 4-(phosphooxy)-L-threonine + NAD(+) = 3-amino-2-oxopropyl phosphate + CO2 + NADH. It functions in the pathway cofactor biosynthesis; pyridoxine 5'-phosphate biosynthesis; pyridoxine 5'-phosphate from D-erythrose 4-phosphate: step 4/5. Catalyzes the NAD(P)-dependent oxidation of 4-(phosphooxy)-L-threonine (HTP) into 2-amino-3-oxo-4-(phosphooxy)butyric acid which spontaneously decarboxylates to form 3-amino-2-oxopropyl phosphate (AHAP). In Vibrio parahaemolyticus serotype O3:K6 (strain RIMD 2210633), this protein is 4-hydroxythreonine-4-phosphate dehydrogenase.